The primary structure comprises 45 residues: Photosystem II reaction center protein K (45 aa).

Residues 1–8 (MNSALFLA) constitute a propeptide that is removed on maturation. Residues 23-43 (ILPVIPVFFLLLAFVWQAAIG) traverse the membrane as a helical segment.

It belongs to the PsbK family. PSII is composed of 1 copy each of membrane proteins PsbA, PsbB, PsbC, PsbD, PsbE, PsbF, PsbH, PsbI, PsbJ, PsbK, PsbL, PsbM, PsbT, PsbX, PsbY, PsbZ, Psb30/Ycf12, at least 3 peripheral proteins of the oxygen-evolving complex and a large number of cofactors. It forms dimeric complexes.

Its subcellular location is the plastid. The protein resides in the chloroplast thylakoid membrane. Its function is as follows. One of the components of the core complex of photosystem II (PSII). PSII is a light-driven water:plastoquinone oxidoreductase that uses light energy to abstract electrons from H(2)O, generating O(2) and a proton gradient subsequently used for ATP formation. It consists of a core antenna complex that captures photons, and an electron transfer chain that converts photonic excitation into a charge separation. The chain is Photosystem II reaction center protein K from Pyropia yezoensis (Susabi-nori).